The following is a 283-amino-acid chain: Protein BASIC PENTACYSTEINE5 (283 aa).

Residues A51–A86 form an alanine-zipper region. A coiled-coil region spans residues K63–E89. A disordered region spans residues E122–W176. Over residues S151–N162 the composition is skewed to basic and acidic residues.

This sequence belongs to the BBR/BPC family. As to quaternary structure, homodimer. Heterodimer. In terms of tissue distribution, expressed in seedlings, leaves and pistils.

The protein localises to the nucleus. Its function is as follows. Transcriptional regulator that specifically binds to GA-rich elements (GAGA-repeats) present in regulatory sequences of genes involved in developmental processes. This chain is Protein BASIC PENTACYSTEINE5 (BPC5), found in Arabidopsis thaliana (Mouse-ear cress).